Reading from the N-terminus, the 93-residue chain is UPF0367 protein tsr0804 (93 aa).

Belongs to the UPF0367 family.

The chain is UPF0367 protein tsr0804 from Thermosynechococcus vestitus (strain NIES-2133 / IAM M-273 / BP-1).